Here is a 110-residue protein sequence, read N- to C-terminus: Insulin growth factor-like family member 1 (110 aa).

An N-terminal signal peptide occupies residues 1-24; the sequence is MAPRGCIVAVFAIFCISRLLCSHG. A glycan (N-linked (GlcNAc...) asparagine) is linked at Asn71.

Belongs to the IGFL family. In terms of assembly, homodimer; disulfide-linked. As to expression, detected in ovary and spinal cord.

Its subcellular location is the secreted. Its function is as follows. Probable ligand of the IGFLR1 cell membrane receptor. This is Insulin growth factor-like family member 1 (IGFL1) from Homo sapiens (Human).